A 349-amino-acid chain; its full sequence is Homoserine O-succinyltransferase (349 aa).

The active-site Acyl-thioester intermediate is the C146. Positions 167 and 196 each coordinate substrate. The active-site Proton acceptor is the H239. Residue E241 is part of the active site. A substrate-binding site is contributed by R253.

This sequence belongs to the MetA family.

Its subcellular location is the cytoplasm. It carries out the reaction L-homoserine + succinyl-CoA = O-succinyl-L-homoserine + CoA. The protein operates within amino-acid biosynthesis; L-methionine biosynthesis via de novo pathway; O-succinyl-L-homoserine from L-homoserine: step 1/1. Functionally, transfers a succinyl group from succinyl-CoA to L-homoserine, forming succinyl-L-homoserine. In vitro, can also use glutaryl-CoA as acyl donor. The sequence is that of Homoserine O-succinyltransferase from Thiobacillus denitrificans (strain ATCC 25259 / T1).